The sequence spans 105 residues: ATP synthase subunit c (105 aa).

3 helical membrane-spanning segments follow: residues 3–23 (FLSL…GGMG), 32–52 (SILG…IGMG), and 78–98 (VAMA…IIAI).

The protein belongs to the ATPase C chain family. F-type ATPases have 2 components, F(1) - the catalytic core - and F(0) - the membrane proton channel. F(1) has five subunits: alpha(3), beta(3), gamma(1), delta(1), epsilon(1). F(0) has three main subunits: a(1), b(2) and c(10-14). The alpha and beta chains form an alternating ring which encloses part of the gamma chain. F(1) is attached to F(0) by a central stalk formed by the gamma and epsilon chains, while a peripheral stalk is formed by the delta and b chains.

The protein localises to the cell inner membrane. F(1)F(0) ATP synthase produces ATP from ADP in the presence of a proton or sodium gradient. F-type ATPases consist of two structural domains, F(1) containing the extramembraneous catalytic core and F(0) containing the membrane proton channel, linked together by a central stalk and a peripheral stalk. During catalysis, ATP synthesis in the catalytic domain of F(1) is coupled via a rotary mechanism of the central stalk subunits to proton translocation. Functionally, key component of the F(0) channel; it plays a direct role in translocation across the membrane. A homomeric c-ring of between 10-14 subunits forms the central stalk rotor element with the F(1) delta and epsilon subunits. The sequence is that of ATP synthase subunit c from Helicobacter pylori (strain Shi470).